The sequence spans 679 residues: MHILTPTQAPLVPNPPHELMYTSSPLQISLPDFRRLCIFKGIYPPREPRNKKKVSKGSTAATTFYYTKDIQYLLHEPLLAKFREHKAVAKKIGRALGRGESGDASRLEKNLMPKVKLDHIIKERYPTFVDALRDLDDALSMLFLFANLPSSDHIPAKTIALCQRLTREFEHYVITSHSLRKSFLSIKGIYYQATIQGQDILWLVPYRFVQRTGGDIDFRIMGTFVEFYTTLLGFVNYRLYTSIGLVYPPKFNARSDEQGGELAAFQLEGKATATNGASNGHAEDAEINPEAQAIADRIGAMPDVEEEEATTAVAKTGAEDDEEEANEEIDKFEPTAPDADILPQPQASSAEVASLFAPFTFYLSRETPRGSLEFILKAFGCKRVGWDGVLGDGAFTTNESDPAITHQIVDRPALSNGAPASNVQETENGGAAAPKAQWPYSMMPGRTYVQPQWVWDSINQGKLLRADHYSPGADLPPHLSPWVKPKKGEYDPNLPLAAQQPEGEAEAFEDEGDEETAFDVDGDEDMEAIVDREGSVEVGEGMDVADDSEDDSDDDESDEEDGPAGDEDDLDSDAESDISEGEAARLQHQRELEAEATGKKLEVKKPTRKEENATIRKKAEKKKRAEEEERERQKMMLSNKKRKLLKRIEYGENKRDNESENLRRKRARVEKAKAAAEAV.

The region spanning 351-471 (EVASLFAPFT…KLLRADHYSP (121 aa)) is the BRCT domain. 2 disordered regions span residues 413–437 (ALSN…PKAQ) and 480–679 (SPWV…AEAV). The span at 418–427 (APASNVQETE) shows a compositional bias: polar residues. Composition is skewed to acidic residues over residues 503 to 528 (GEAE…DMEA) and 543 to 580 (DVAD…DISE). A coiled-coil region spans residues 573–679 (DAESDISEGE…EKAKAAAEAV (107 aa)). Composition is skewed to basic and acidic residues over residues 582-614 (EAAR…ENAT), 623-634 (KRAEEEERERQK), 646-662 (KRIE…SENL), and 669-679 (VEKAKAAAEAV).

Belongs to the pescadillo family. Component of the NOP7 complex, composed of erb1, nop7 and ytm1. The complex is held together by erb1, which interacts with nop7 via its N-terminal domain and with ytm1 via a high-affinity interaction between the seven-bladed beta-propeller domains of the 2 proteins. The NOP7 complex associates with the 66S pre-ribosome.

It localises to the nucleus. The protein localises to the nucleolus. The protein resides in the nucleoplasm. In terms of biological role, component of the NOP7 complex, which is required for maturation of the 25S and 5.8S ribosomal RNAs and formation of the 60S ribosome. The sequence is that of Pescadillo homolog (nop7) from Pyrenophora tritici-repentis (strain Pt-1C-BFP) (Wheat tan spot fungus).